The sequence spans 212 residues: GTP cyclohydrolase 1 (212 aa).

Residues C103, H106, and C174 each coordinate Zn(2+).

The protein belongs to the GTP cyclohydrolase I family. Toroid-shaped homodecamer, composed of two pentamers of five dimers.

The enzyme catalyses GTP + H2O = 7,8-dihydroneopterin 3'-triphosphate + formate + H(+). The protein operates within cofactor biosynthesis; 7,8-dihydroneopterin triphosphate biosynthesis; 7,8-dihydroneopterin triphosphate from GTP: step 1/1. This Caulobacter vibrioides (strain ATCC 19089 / CIP 103742 / CB 15) (Caulobacter crescentus) protein is GTP cyclohydrolase 1.